The primary structure comprises 168 residues: uncharacterized protein (168 aa).

Residues 1–10 show a composition bias toward pro residues; the sequence is MSPTTGPQPN. 2 disordered regions span residues 1 to 23 and 117 to 143; these read MSPT…TGPQ and EPGN…RGPQ.

This is an uncharacterized protein from Homo sapiens (Human).